A 216-amino-acid polypeptide reads, in one-letter code: Cobalt-zinc-cadmium resistance protein CzcN (216 aa).

3 consecutive transmembrane segments (helical) span residues 27 to 47 (IGVW…GHSR), 50 to 70 (GTWV…LATV), and 116 to 136 (ESLA…PAVI).

To A.xylosoxydans NccN.

The protein localises to the cell inner membrane. Its function is as follows. Component of the CZC cation-efflux system that confers resistance to cobalt, zinc and cadmium. The polypeptide is Cobalt-zinc-cadmium resistance protein CzcN (czcN) (Cupriavidus metallidurans (strain ATCC 43123 / DSM 2839 / NBRC 102507 / CH34) (Ralstonia metallidurans)).